Consider the following 471-residue polypeptide: MPSPIHVIGGGLSGAEAAWQIAKAGIPVILHEMRPDRSTPAHHSADLAELVCSNSFRADDAESSAIGILHREMRRLDSLILQAADCNRLPAGGALAVDRQGFAAFVTAAIKASPLITLVRGEVTEIPADWDQIIIATGPLTSETLAAHIKALTGEDDLAFFDAIAPVVYRDSIDMTKAWFQSRYDKVGPGGNGADYINCPLDKEQYQAFVEGLIQGEKISFKEWEGTPYFNGCLPIEIMAERGPETLRHGPMKPVGLTNAHAPTVKPYAIVQLRQDNALGTLYNMVGFQTKLKHAEQIALFRTIPGLEQARFARLGGLHRNIFLNTPKVLDMRLRLKADPRLRFAGQITGCEGYVESAGIGLLVGRMAACERLGESFVPPPTTTALGALLNHITAGHIETIDAGPRSFQPMNVNFGLFPPLTEKIVSPEGKRLRGPEKDQLKKRLLSQRAERDLEAWCTAPTCGPTPLAAE.

Glycine 9 to glycine 14 provides a ligand contact to FAD.

It belongs to the MnmG family. TrmFO subfamily. FAD is required as a cofactor.

Its subcellular location is the cytoplasm. It carries out the reaction uridine(54) in tRNA + (6R)-5,10-methylene-5,6,7,8-tetrahydrofolate + NADH + H(+) = 5-methyluridine(54) in tRNA + (6S)-5,6,7,8-tetrahydrofolate + NAD(+). The enzyme catalyses uridine(54) in tRNA + (6R)-5,10-methylene-5,6,7,8-tetrahydrofolate + NADPH + H(+) = 5-methyluridine(54) in tRNA + (6S)-5,6,7,8-tetrahydrofolate + NADP(+). In terms of biological role, catalyzes the folate-dependent formation of 5-methyl-uridine at position 54 (M-5-U54) in all tRNAs. The polypeptide is Methylenetetrahydrofolate--tRNA-(uracil-5-)-methyltransferase TrmFO (Beijerinckia indica subsp. indica (strain ATCC 9039 / DSM 1715 / NCIMB 8712)).